The sequence spans 498 residues: Angiopoietin-4 (498 aa).

Positions 1–22 are cleaved as a signal peptide; the sequence is MPSPPAMLLGGLLLIVASTTVA. Residues 51–80 are disordered; that stretch reads EPEPCPPEPEAFGGSNSLQRDSPAATLNLG. A coiled-coil region spans residues 85 to 109; that stretch reads QRMRQLEKMLENNTQWLQKLERYIQ. Asparagine 96, asparagine 126, asparagine 158, asparagine 247, asparagine 295, asparagine 306, asparagine 332, and asparagine 424 each carry an N-linked (GlcNAc...) asparagine glycan. The stretch at 186–254 forms a coiled coil; the sequence is HELHRLQGHN…SSNSSLLQRQ (69 aa). In terms of domain architecture, Fibrinogen C-terminal spans 277 to 497; that stretch reads RAADQLFQDC…TTRMMVRPSG (221 aa). Cysteine 286 and cysteine 315 are oxidised to a cystine. Residues cysteine 439 and cysteine 452 are joined by a disulfide bond.

Homodimer; disulfide-linked. Interacts with TEK/TIE2.

The protein resides in the secreted. Its function is as follows. Binds to TEK/TIE2, modulating ANGPT1 signaling. Can induce tyrosine phosphorylation of TEK/TIE2. Promotes endothelial cell survival, migration and angiogenesis. The sequence is that of Angiopoietin-4 (ANGPT4) from Bos taurus (Bovine).